Reading from the N-terminus, the 414-residue chain is Enterobactin exporter EntS (414 aa).

Residues 1–21 (MNRQSWLLNLSLLKTHPAFRA) lie on the Cytoplasmic side of the membrane. A helical membrane pass occupies residues 22–42 (VFLARFISIVSLGLLGVAVPV). At 43–55 (QIQMMTHSTWQVG) the chain is on the periplasmic side. Residues 56 to 76 (LSVTLTGGAMFIGLMVGGVLA) traverse the membrane as a helical segment. Residues 77–83 (DRYERKK) are Cytoplasmic-facing. Residues 84 to 104 (VILLARGTCGIGFIGLCVNAL) traverse the membrane as a helical segment. Over 105–109 (LPEPS) the chain is Periplasmic. A helical transmembrane segment spans residues 110–130 (LLAIYLLGLWDGFFASLGVTA). Over 131–156 (LLAATPALVGRENLMQAGAITMLTVR) the chain is Cytoplasmic. Residues 157–177 (LGSVISPMLGGILLASGGVAW) form a helical membrane-spanning segment. A topological domain (periplasmic) is located at residue asparagine 178. A helical transmembrane segment spans residues 179-199 (YGLAAAGTFITLLPLLTLPRL). The Cytoplasmic portion of the chain corresponds to 200-218 (PVPPQPRENPFLALLAAFR). The chain crosses the membrane as a helical span at residues 219–239 (FLLACPLIGGIALLGGLVTMA). Over 240–256 (SAVRVLYPALAMSWQMS) the chain is Periplasmic. A helical transmembrane segment spans residues 257-277 (AAQIGLLYAAIPLGAAIGALT). Residues 278-287 (SGQLAHSVRP) are Cytoplasmic-facing. A helical transmembrane segment spans residues 288 to 307 (GLIMLVSTVGSFLAVGLFAI). Topologically, residues 308-313 (MPVWIA) are periplasmic. A helical transmembrane segment spans residues 314 to 336 (GVICLALFGWLSAISSLLQYTLL). Over 337–356 (QTQTPENMLGRMNGLWTAQN) the chain is Cytoplasmic. Residues 357–377 (VTGDAIGAALLGGLGAMMTPV) traverse the membrane as a helical segment. Position 378 (alanine 378) is a topological domain, periplasmic. A helical transmembrane segment spans residues 379 to 399 (SASVSGFGLVIIGLLLLLVLG). Residues 400 to 414 (ELRRFRQTSPVSDAG) are Cytoplasmic-facing.

Belongs to the major facilitator superfamily. EntS (TC 2.A.1.38) family.

It is found in the cell inner membrane. Functionally, component of an export pathway for enterobactin. The sequence is that of Enterobactin exporter EntS from Salmonella paratyphi A (strain ATCC 9150 / SARB42).